A 960-amino-acid polypeptide reads, in one-letter code: ATPase 4, plasma membrane-type (960 aa).

The Cytoplasmic portion of the chain corresponds to 1–69 (MTTTVEDNRE…EKKESKFLKF (69 aa)). A helical transmembrane segment spans residues 70–89 (LGFMWNPLSWVMEAAAIMAI). The Extracellular portion of the chain corresponds to 90-101 (ALANGGGKPPDW). A helical membrane pass occupies residues 102–122 (QDFVGIITLLVINSTISFIEE). The Cytoplasmic segment spans residues 123 to 251 (NNAGNAAAAL…GHFQQVLTAI (129 aa)). A helical membrane pass occupies residues 252-272 (GNFCICSIAVGMLIEIVVMYP). Residues 273 to 281 (IQHRAYRPG) are Extracellular-facing. The helical transmembrane segment at 282 to 299 (IDNLLVLLIGGIPIAMPT) threads the bilayer. The Cytoplasmic portion of the chain corresponds to 300–651 (VLSVTMAIGS…TSRAIFQRMK (352 aa)). The 4-aspartylphosphate intermediate role is filled by Asp-337. Residues Asp-596 and Asp-600 each contribute to the Mg(2+) site. Residues 652–673 (NYTIYAVSITIRIVLGFMLLAL) form a helical membrane-spanning segment. The Extracellular portion of the chain corresponds to 674 to 678 (IWQFD). Residues 679–701 (FPPFMVLIIAILNDGTIMTISKD) traverse the membrane as a helical segment. Topologically, residues 702–717 (RVKPSPLPDSWKLSEI) are cytoplasmic. The chain crosses the membrane as a helical span at residues 718-738 (FATGVVFGSYMAMMTVIFFWV). At 739-763 (SYKTDFFPRTFGVATLEKTAHDDFR) the chain is on the extracellular side. A helical transmembrane segment spans residues 764 to 784 (KLASAIYLQVSIISQALIFVT). At 785–796 (RSRSWSFVERPG) the chain is on the cytoplasmic side. The chain crosses the membrane as a helical span at residues 797–817 (IFLMIAFILAQLVATLIAVYA). Over 818 to 825 (NWSFAAIE) the chain is Extracellular. A helical membrane pass occupies residues 826 to 846 (GIGWGWAGVIWLYNIIFYIPL). The Cytoplasmic segment spans residues 847-960 (DFIKFFIRYA…IETIQQAYTV (114 aa)). Thr-893 bears the Phosphothreonine mark. The residue at position 942 (Ser-942) is a Phosphoserine. An interaction with 14-3-3 proteins region spans residues 958–960 (YTV). Thr-959 is modified (phosphothreonine).

This sequence belongs to the cation transport ATPase (P-type) (TC 3.A.3) family. Type IIIA subfamily. Binds to 14-3-3 proteins. The binding is induced by phosphorylation of Thr-959. Binding to 14-3-3 proteins activates the H(+)-ATPase. Expressed in guard cells and roots.

It is found in the cell membrane. It carries out the reaction ATP + H2O + H(+)(in) = ADP + phosphate + 2 H(+)(out). Functionally, the plasma membrane H(+) ATPase of plants and fungi generates a proton gradient that drives the active transport of nutrients by H(+)-symport. The resulting external acidification and/or internal alkinization may mediate growth responses. This is ATPase 4, plasma membrane-type (AHA4) from Arabidopsis thaliana (Mouse-ear cress).